Consider the following 254-residue polypeptide: 4-hydroxy-tetrahydrodipicolinate reductase (254 aa).

NAD(+)-binding positions include 8 to 13 (GCSGKM), Asp-35, 86 to 88 (CST), and 110 to 113 (SANM). The active-site Proton donor/acceptor is His-143. A (S)-2,3,4,5-tetrahydrodipicolinate-binding site is contributed by His-144. The active-site Proton donor is Lys-147. A (S)-2,3,4,5-tetrahydrodipicolinate-binding site is contributed by 153–154 (GT).

Belongs to the DapB family.

The protein localises to the cytoplasm. The enzyme catalyses (S)-2,3,4,5-tetrahydrodipicolinate + NAD(+) + H2O = (2S,4S)-4-hydroxy-2,3,4,5-tetrahydrodipicolinate + NADH + H(+). It carries out the reaction (S)-2,3,4,5-tetrahydrodipicolinate + NADP(+) + H2O = (2S,4S)-4-hydroxy-2,3,4,5-tetrahydrodipicolinate + NADPH + H(+). The protein operates within amino-acid biosynthesis; L-lysine biosynthesis via DAP pathway; (S)-tetrahydrodipicolinate from L-aspartate: step 4/4. Functionally, catalyzes the conversion of 4-hydroxy-tetrahydrodipicolinate (HTPA) to tetrahydrodipicolinate. The polypeptide is 4-hydroxy-tetrahydrodipicolinate reductase (Clostridium perfringens (strain SM101 / Type A)).